Consider the following 393-residue polypeptide: MSCPVGNHNGDPQGGQRLGSEAGMLYGEYLMLDKVLSAQRMLSVESNKPVHDEHLFIVTHQAYELWFKQIIFELDSIRSLFSTEHMEESRTLEILKRLNRIVMILKLLVDQVPILETMTPLDFMDFRDFLSPASGFQSLQFRLLENKLGVKTEHRVKYNQKYSEVFASDPCAIERLSITESEPSLADLVQKWLERTPGLETNGFNFWGKFEESVEQLLADQEASAMEEEHENVKNYRLMDIEKRREVYKSIFDASVHDALVARGDRRFTHRALQGAIMITFYRDEPRFSQPHQLLMLLMDIDSLITKWRYNHVIMVQRMIGSQQLGTGGSSGYQYLRSTLSDRYKVFIDLFNLSTFLIPRGSIPPLTCEMQKALNLAWGSPVHQAKQINYAAK.

Substrate-binding positions include 56-60 (FIVTH) and R127. Position 312 (H312) interacts with heme. T327 contacts substrate.

This sequence belongs to the tryptophan 2,3-dioxygenase family. Homotetramer. Dimer of dimers. It depends on heme as a cofactor.

The enzyme catalyses L-tryptophan + O2 = N-formyl-L-kynurenine. Its pathway is amino-acid degradation; L-tryptophan degradation via kynurenine pathway; L-kynurenine from L-tryptophan: step 1/2. It functions in the pathway pigment biosynthesis; ommochrome biosynthesis. Its activity is regulated as follows. Stimulated by low concentrations of hydrogen peroxide (5 uM), ascorbate (0.1-0.3 mM), and sodium hydrosulfite (0.1 mM). Inhibited by high concentrations of hydrogen peroxide (0.1 mM), ascorbate (10 mM), and sodium hydrosulfite (1 mM). Its function is as follows. Heme-dependent dioxygenase that catalyzes the oxidative cleavage of the L-tryptophan (L-Trp) pyrrole ring and converts L-tryptophan to N-formyl-L-kynurenine. Catalyzes the oxidative cleavage of the indole moiety. The polypeptide is Tryptophan 2,3-dioxygenase (Aedes aegypti (Yellowfever mosquito)).